The chain runs to 968 residues: RNA polymerase-associated protein RapA (968 aa).

A Helicase ATP-binding domain is found at 164 to 334; sequence DVGRRHAPRV…FARLRLLDPN (171 aa). 177–184 is a binding site for ATP; it reads DEVGLGKT. A DEAH box motif is present at residues 280–283; it reads DEAH. In terms of domain architecture, Helicase C-terminal spans 490–685; the sequence is RVEWLMGYLT…ALKAQLEQGR (196 aa).

This sequence belongs to the SNF2/RAD54 helicase family. RapA subfamily. In terms of assembly, interacts with the RNAP. Has a higher affinity for the core RNAP than for the holoenzyme. Its ATPase activity is stimulated by binding to RNAP.

Transcription regulator that activates transcription by stimulating RNA polymerase (RNAP) recycling in case of stress conditions such as supercoiled DNA or high salt concentrations. Probably acts by releasing the RNAP, when it is trapped or immobilized on tightly supercoiled DNA. Does not activate transcription on linear DNA. Probably not involved in DNA repair. This Salmonella newport (strain SL254) protein is RNA polymerase-associated protein RapA.